Reading from the N-terminus, the 709-residue chain is ATP-dependent zinc metalloprotease FtsH (709 aa).

Residues 1 to 25 (MKKNKGLNEATTSEKPQFPKRTAWK) are Cytoplasmic-facing. Residues 26 to 46 (IFWWVVILAIIIGILVYILMP) traverse the membrane as a helical segment. The Extracellular portion of the chain corresponds to 47–171 (RATTAVIEKW…FVAPDTRARD (125 aa)). The helical transmembrane segment at 172 to 192 (VLNIFFGLLPIIIFVIFFLLF) threads the bilayer. At 193 to 709 (WRSARGISGG…DTEKDSETNS (517 aa)) the chain is on the cytoplasmic side. ATP is bound at residue 268-275 (GPPGTGKT). H490 lines the Zn(2+) pocket. E491 is a catalytic residue. Zn(2+) is bound by residues H494 and D569. Positions 673-709 (ILAQKQEQQAKQKAEAKEAKLNKKTEKDTEKDSETNS) are disordered. Residues 680–709 (QQAKQKAEAKEAKLNKKTEKDTEKDSETNS) show a composition bias toward basic and acidic residues.

This sequence in the central section; belongs to the AAA ATPase family. It in the C-terminal section; belongs to the peptidase M41 family. Homohexamer. The cofactor is Zn(2+).

It localises to the cell membrane. Its function is as follows. Acts as a processive, ATP-dependent zinc metallopeptidase for both cytoplasmic and membrane proteins. Plays a role in the quality control of integral membrane proteins. This is ATP-dependent zinc metalloprotease FtsH from Mycoplasma pneumoniae (strain ATCC 29342 / M129 / Subtype 1) (Mycoplasmoides pneumoniae).